Reading from the N-terminus, the 246-residue chain is Aquaporin SIP1-1 (246 aa).

The next 2 helical transmembrane spans lie at 13–33 (AAVTFLWVLCVSTLGASTAAV) and 45–65 (YALLVTVSLLSVLLFAFNLLC). Positions 74–76 (NPT) match the NPA 1 motif. The next 3 membrane-spanning stretches (helical) occupy residues 95-115 (FPLALRFPAQAAGAVGGAMAI), 139-159 (GAAAELVLTFVITLAVLWIIV), and 166-186 (IVKTWMLSISTVCLVLTGAAY). Positions 192 to 194 (NPA) match the NPA 2 motif. The chain crosses the membrane as a helical span at residues 214–234 (VYWICPFVGAVLAAWVFRAVF).

The protein belongs to the MIP/aquaporin (TC 1.A.8) family. SIP (TC 1.A.8.10) subfamily. As to expression, expressed in roots, leaves and anthers.

The protein localises to the membrane. Aquaporins facilitate the transport of water and small neutral solutes across cell membranes. The sequence is that of Aquaporin SIP1-1 (SIP1-1) from Oryza sativa subsp. japonica (Rice).